Consider the following 213-residue polypeptide: Large ribosomal subunit protein uL1 (213 aa).

Belongs to the universal ribosomal protein uL1 family. As to quaternary structure, part of the 50S ribosomal subunit.

In terms of biological role, binds directly to 23S rRNA. Probably involved in E site tRNA release. Its function is as follows. Protein L1 is also a translational repressor protein, it controls the translation of its operon by binding to its mRNA. This is Large ribosomal subunit protein uL1 from Picrophilus torridus (strain ATCC 700027 / DSM 9790 / JCM 10055 / NBRC 100828 / KAW 2/3).